The sequence spans 652 residues: DNA ligase (652 aa).

NAD(+)-binding positions include 29-33, 78-79, and glutamate 107; these read DSEYD and SL. Residue lysine 109 is the N6-AMP-lysine intermediate of the active site. 4 residues coordinate NAD(+): arginine 130, glutamate 164, lysine 278, and lysine 302. The Zn(2+) site is built by cysteine 395, cysteine 398, cysteine 413, and cysteine 418. The 76-residue stretch at 577–652 folds into the BRCT domain; sequence VADAALSGLT…VRDEAWLESL (76 aa).

It belongs to the NAD-dependent DNA ligase family. LigA subfamily. Mg(2+) is required as a cofactor. It depends on Mn(2+) as a cofactor.

It carries out the reaction NAD(+) + (deoxyribonucleotide)n-3'-hydroxyl + 5'-phospho-(deoxyribonucleotide)m = (deoxyribonucleotide)n+m + AMP + beta-nicotinamide D-nucleotide.. DNA ligase that catalyzes the formation of phosphodiester linkages between 5'-phosphoryl and 3'-hydroxyl groups in double-stranded DNA using NAD as a coenzyme and as the energy source for the reaction. It is essential for DNA replication and repair of damaged DNA. The polypeptide is DNA ligase (Streptococcus pneumoniae (strain P1031)).